The primary structure comprises 399 residues: Succinate--CoA ligase [ADP-forming] subunit beta (399 aa).

Residues Lys9–Glu254 form the ATP-grasp domain. Residues Lys46, Gly53–Gly55, Glu109, Ala112, and Glu117 contribute to the ATP site. Residues Asn209 and Asp223 each contribute to the Mg(2+) site. Residues Asn274 and Gly331–Met333 contribute to the substrate site.

The protein belongs to the succinate/malate CoA ligase beta subunit family. As to quaternary structure, heterotetramer of two alpha and two beta subunits. Mg(2+) serves as cofactor.

It carries out the reaction succinate + ATP + CoA = succinyl-CoA + ADP + phosphate. The enzyme catalyses GTP + succinate + CoA = succinyl-CoA + GDP + phosphate. It functions in the pathway carbohydrate metabolism; tricarboxylic acid cycle; succinate from succinyl-CoA (ligase route): step 1/1. In terms of biological role, succinyl-CoA synthetase functions in the citric acid cycle (TCA), coupling the hydrolysis of succinyl-CoA to the synthesis of either ATP or GTP and thus represents the only step of substrate-level phosphorylation in the TCA. The beta subunit provides nucleotide specificity of the enzyme and binds the substrate succinate, while the binding sites for coenzyme A and phosphate are found in the alpha subunit. The chain is Succinate--CoA ligase [ADP-forming] subunit beta from Phenylobacterium zucineum (strain HLK1).